A 165-amino-acid chain; its full sequence is Transcriptional repressor NrdR (165 aa).

Residues 3–34 (CPFCSANDTKVIDSRLVSDGHQVRRRRECLAC) fold into a zinc finger. The ATP-cone domain occupies 49 to 139 (PRIIKRDGSR…VYLSFEDISE (91 aa)).

This sequence belongs to the NrdR family. It depends on Zn(2+) as a cofactor.

Functionally, negatively regulates transcription of bacterial ribonucleotide reductase nrd genes and operons by binding to NrdR-boxes. The protein is Transcriptional repressor NrdR of Colwellia psychrerythraea (strain 34H / ATCC BAA-681) (Vibrio psychroerythus).